A 179-amino-acid polypeptide reads, in one-letter code: Large ribosomal subunit protein uL5 (179 aa).

The protein belongs to the universal ribosomal protein uL5 family. In terms of assembly, part of the 50S ribosomal subunit; part of the 5S rRNA/L5/L18/L25 subcomplex. Contacts the 5S rRNA and the P site tRNA. Forms a bridge to the 30S subunit in the 70S ribosome.

Its function is as follows. This is one of the proteins that bind and probably mediate the attachment of the 5S RNA into the large ribosomal subunit, where it forms part of the central protuberance. In the 70S ribosome it contacts protein S13 of the 30S subunit (bridge B1b), connecting the 2 subunits; this bridge is implicated in subunit movement. Contacts the P site tRNA; the 5S rRNA and some of its associated proteins might help stabilize positioning of ribosome-bound tRNAs. The sequence is that of Large ribosomal subunit protein uL5 from Enterobacter sp. (strain 638).